The chain runs to 213 residues: Ribosomal RNA small subunit methyltransferase G (213 aa).

S-adenosyl-L-methionine contacts are provided by residues glycine 75, phenylalanine 80, 128–129 (IE), and arginine 144.

Belongs to the methyltransferase superfamily. RNA methyltransferase RsmG family.

The protein localises to the cytoplasm. The catalysed reaction is guanosine(527) in 16S rRNA + S-adenosyl-L-methionine = N(7)-methylguanosine(527) in 16S rRNA + S-adenosyl-L-homocysteine. In terms of biological role, specifically methylates the N7 position of guanine in position 527 of 16S rRNA. This Brucella anthropi (strain ATCC 49188 / DSM 6882 / CCUG 24695 / JCM 21032 / LMG 3331 / NBRC 15819 / NCTC 12168 / Alc 37) (Ochrobactrum anthropi) protein is Ribosomal RNA small subunit methyltransferase G.